Reading from the N-terminus, the 123-residue chain is Large ribosomal subunit protein uL29 (123 aa).

This sequence belongs to the universal ribosomal protein uL29 family. In terms of assembly, component of the large ribosomal subunit.

It localises to the cytoplasm. Functionally, component of the large ribosomal subunit. The ribosome is a large ribonucleoprotein complex responsible for the synthesis of proteins in the cell. The sequence is that of Large ribosomal subunit protein uL29 (rpl35) from Platichthys flesus (European flounder).